Consider the following 355-residue polypeptide: Protein RecA (355 aa).

65 to 72 (GPESSGKT) lines the ATP pocket.

The protein belongs to the RecA family.

It is found in the cytoplasm. Functionally, can catalyze the hydrolysis of ATP in the presence of single-stranded DNA, the ATP-dependent uptake of single-stranded DNA by duplex DNA, and the ATP-dependent hybridization of homologous single-stranded DNAs. It interacts with LexA causing its activation and leading to its autocatalytic cleavage. The protein is Protein RecA of Pseudomonas putida (strain W619).